Consider the following 431-residue polypeptide: Glutamate-1-semialdehyde 2,1-aminomutase (431 aa).

The residue at position 269 (Lys269) is an N6-(pyridoxal phosphate)lysine.

It belongs to the class-III pyridoxal-phosphate-dependent aminotransferase family. HemL subfamily. Homodimer. It depends on pyridoxal 5'-phosphate as a cofactor.

It localises to the cytoplasm. It catalyses the reaction (S)-4-amino-5-oxopentanoate = 5-aminolevulinate. The protein operates within porphyrin-containing compound metabolism; protoporphyrin-IX biosynthesis; 5-aminolevulinate from L-glutamyl-tRNA(Glu): step 2/2. This chain is Glutamate-1-semialdehyde 2,1-aminomutase, found in Tolumonas auensis (strain DSM 9187 / NBRC 110442 / TA 4).